Consider the following 184-residue polypeptide: ATP synthase subunit b 1 (184 aa).

The chain crosses the membrane as a helical span at residues 4–24 (LSILAALAASPAMAATGPFFS).

It belongs to the ATPase B chain family. F-type ATPases have 2 components, F(1) - the catalytic core - and F(0) - the membrane proton channel. F(1) has five subunits: alpha(3), beta(3), gamma(1), delta(1), epsilon(1). F(0) has three main subunits: a(1), b(2) and c(10-14). The alpha and beta chains form an alternating ring which encloses part of the gamma chain. F(1) is attached to F(0) by a central stalk formed by the gamma and epsilon chains, while a peripheral stalk is formed by the delta and b chains.

The protein resides in the cell inner membrane. F(1)F(0) ATP synthase produces ATP from ADP in the presence of a proton or sodium gradient. F-type ATPases consist of two structural domains, F(1) containing the extramembraneous catalytic core and F(0) containing the membrane proton channel, linked together by a central stalk and a peripheral stalk. During catalysis, ATP synthesis in the catalytic domain of F(1) is coupled via a rotary mechanism of the central stalk subunits to proton translocation. In terms of biological role, component of the F(0) channel, it forms part of the peripheral stalk, linking F(1) to F(0). The polypeptide is ATP synthase subunit b 1 (Cereibacter sphaeroides (strain ATCC 17025 / ATH 2.4.3) (Rhodobacter sphaeroides)).